The following is a 563-amino-acid chain: Arginine--tRNA ligase (563 aa).

The short motif at 120–130 is the 'HIGH' region element; it reads PNIAKPFHIGH.

The protein belongs to the class-I aminoacyl-tRNA synthetase family. Monomer.

It is found in the cytoplasm. The enzyme catalyses tRNA(Arg) + L-arginine + ATP = L-arginyl-tRNA(Arg) + AMP + diphosphate. This is Arginine--tRNA ligase from Clostridium botulinum (strain Langeland / NCTC 10281 / Type F).